A 183-amino-acid chain; its full sequence is ESX-1 secretion-associated protein EspH (183 aa).

The span at 1 to 16 (MVDPPGNDDDHGDLDA) shows a compositional bias: acidic residues. Positions 1–32 (MVDPPGNDDDHGDLDALDFSAAHTNEASPLDA) are disordered.

The chain is ESX-1 secretion-associated protein EspH from Mycobacterium tuberculosis (strain ATCC 25618 / H37Rv).